The sequence spans 833 residues: Leucine--tRNA ligase (833 aa).

The 'HIGH' region motif lies at 41-52; sequence PYPSGAGLHVGH. A 'KMSKS' region motif is present at residues 610–614; it reads KMSKS. Position 613 (K613) interacts with ATP.

The protein belongs to the class-I aminoacyl-tRNA synthetase family.

It is found in the cytoplasm. It catalyses the reaction tRNA(Leu) + L-leucine + ATP = L-leucyl-tRNA(Leu) + AMP + diphosphate. This Streptococcus equi subsp. zooepidemicus (strain H70) protein is Leucine--tRNA ligase.